The chain runs to 989 residues: Mediator of RNA polymerase II transcription subunit 24 (989 aa).

6 consecutive short sequence motifs (LXXLL motif) follow at residues 343–347 (LTPLL), 359–363 (LSLLL), 447–451 (LDLLL), 556–560 (LVALL), 787–791 (LPRLL), and 857–861 (LMRLL).

Belongs to the Mediator complex subunit 24 family. Component of the Mediator complex.

The protein localises to the nucleus. Functionally, component of the Mediator complex, a coactivator involved in the regulated transcription of nearly all RNA polymerase II-dependent genes. Mediator functions as a bridge to convey information from gene-specific regulatory proteins to the basal RNA polymerase II transcription machinery. Mediator is recruited to promoters by direct interactions with regulatory proteins and serves as a scaffold for the assembly of a functional preinitiation complex with RNA polymerase II and the general transcription factors. Required for proliferation of enteric nervous system precursors. Required for the development of dopaminergic amacrine cells and rod photoreceptor cells in the retina. The polypeptide is Mediator of RNA polymerase II transcription subunit 24 (med24) (Danio rerio (Zebrafish)).